We begin with the raw amino-acid sequence, 201 residues long: Recombination protein RecR (201 aa).

The C4-type zinc-finger motif lies at cysteine 57 to cysteine 72. Positions glycine 81–proline 176 constitute a Toprim domain.

Belongs to the RecR family.

Functionally, may play a role in DNA repair. It seems to be involved in an RecBC-independent recombinational process of DNA repair. It may act with RecF and RecO. This is Recombination protein RecR from Salmonella arizonae (strain ATCC BAA-731 / CDC346-86 / RSK2980).